The chain runs to 719 residues: Protein psiJ (719 aa).

The signal sequence occupies residues 1-21; sequence MVSNLLKGLILFSLFISFLNG. The Extracellular segment spans residues 22–653; the sequence is DDKIFPVTIR…RCQSVAVKAG (632 aa). 10 N-linked (GlcNAc...) asparagine glycosylation sites follow: Asn-46, Asn-59, Asn-86, Asn-113, Asn-301, Asn-372, Asn-435, Asn-457, Asn-562, and Asn-628. Residues 112-260 enclose the PA14 domain; that stretch reads QNQTDPRVFY…KDYCGVCEGT (149 aa). A helical membrane pass occupies residues 654–674; that stretch reads VIGGAAIAGVVVGGAVALGLA. Over 675–719 the chain is Cytoplasmic; the sequence is LFGAKAGYNHWMSLKNNQMATSSVNPLYEPSPHQGTNPLWEAPPT.

It belongs to the prespore-cell-inducing factor family.

Its subcellular location is the membrane. This Dictyostelium discoideum (Social amoeba) protein is Protein psiJ (psiJ).